Consider the following 635-residue polypeptide: Threonine--tRNA ligase (635 aa).

Residues Met-1–Thr-61 enclose the TGS domain. The segment at Asp-242–Pro-533 is catalytic. Zn(2+) contacts are provided by Cys-333, His-384, and His-510.

This sequence belongs to the class-II aminoacyl-tRNA synthetase family. Homodimer. Requires Zn(2+) as cofactor.

It localises to the cytoplasm. The enzyme catalyses tRNA(Thr) + L-threonine + ATP = L-threonyl-tRNA(Thr) + AMP + diphosphate + H(+). Functionally, catalyzes the attachment of threonine to tRNA(Thr) in a two-step reaction: L-threonine is first activated by ATP to form Thr-AMP and then transferred to the acceptor end of tRNA(Thr). Also edits incorrectly charged L-seryl-tRNA(Thr). The protein is Threonine--tRNA ligase of Burkholderia cenocepacia (strain ATCC BAA-245 / DSM 16553 / LMG 16656 / NCTC 13227 / J2315 / CF5610) (Burkholderia cepacia (strain J2315)).